The chain runs to 134 residues: Large ribosomal subunit protein uL16c (134 aa).

Belongs to the universal ribosomal protein uL16 family. As to quaternary structure, part of the 50S ribosomal subunit.

The protein resides in the plastid. Its subcellular location is the chloroplast. This is Large ribosomal subunit protein uL16c from Atropa belladonna (Belladonna).